We begin with the raw amino-acid sequence, 416 residues long: Phosphatidylserine decarboxylase proenzyme, mitochondrial (416 aa).

Topologically, residues 1-67 (MPGKSTRPLP…GRLHFPQLAL (67 aa)) are mitochondrial matrix. Residues 68–86 (RRRLGQLSCMSKPALKLRS) form a helical membrane-spanning segment. The Mitochondrial intermembrane portion of the chain corresponds to 87-416 (WPLTVLYYLL…IRFGEALGSL (330 aa)). Active-site charge relay system; for autoendoproteolytic cleavage activity residues include Asp198, His274, and Ser385. The active-site Schiff-base intermediate with substrate; via pyruvic acid; for decarboxylase activity is the Ser385. Pyruvic acid (Ser); by autocatalysis is present on Ser385.

The protein belongs to the phosphatidylserine decarboxylase family. PSD-B subfamily. Eukaryotic type I sub-subfamily. In terms of assembly, heterodimer of a large membrane-associated beta subunit and a small pyruvoyl-containing alpha subunit. Requires pyruvate as cofactor. Post-translationally, is synthesized initially as an inactive proenzyme. Formation of the active enzyme involves a self-maturation process in which the active site pyruvoyl group is generated from an internal serine residue via an autocatalytic post-translational modification. Two non-identical subunits are generated from the proenzyme in this reaction, and the pyruvate is formed at the N-terminus of the alpha chain, which is derived from the carboxyl end of the proenzyme. The autoendoproteolytic cleavage occurs by a canonical serine protease mechanism, in which the side chain hydroxyl group of the serine supplies its oxygen atom to form the C-terminus of the beta chain, while the remainder of the serine residue undergoes an oxidative deamination to produce ammonia and the pyruvoyl prosthetic group on the alpha chain. During this reaction, the Ser that is part of the protease active site of the proenzyme becomes the pyruvoyl prosthetic group, which constitutes an essential element of the active site of the mature decarboxylase.

It localises to the mitochondrion inner membrane. Its subcellular location is the cytoplasm. It is found in the lipid droplet. The catalysed reaction is a 1,2-diacyl-sn-glycero-3-phospho-L-serine + H(+) = a 1,2-diacyl-sn-glycero-3-phosphoethanolamine + CO2. It participates in phospholipid metabolism; phosphatidylethanolamine biosynthesis. Its function is as follows. Catalyzes the formation of phosphatidylethanolamine (PtdEtn) from phosphatidylserine (PtdSer). Plays a central role in phospholipid metabolism and in the interorganelle trafficking of phosphatidylserine. May be involved in lipid droplet biogenesis at the endoplasmic reticulum membrane. The polypeptide is Phosphatidylserine decarboxylase proenzyme, mitochondrial (Bos taurus (Bovine)).